A 158-amino-acid polypeptide reads, in one-letter code: Small ribosomal subunit protein uS15 (158 aa).

The span at 1–18 (MARMHARKRGKSGSKRPP) shows a compositional bias: basic residues. The interval 1 to 21 (MARMHARKRGKSGSKRPPRTA) is disordered.

This sequence belongs to the universal ribosomal protein uS15 family. Part of the 30S ribosomal subunit.

The protein is Small ribosomal subunit protein uS15 of Pyrococcus abyssi (strain GE5 / Orsay).